Reading from the N-terminus, the 217-residue chain is Somatotropin (217 aa).

The first 27 residues, 1 to 27, serve as a signal peptide directing secretion; the sequence is MMAAGPRASLLLAFALLCLPWTQEVGA. His46 contacts Zn(2+). Cys79 and Cys190 are disulfide-bonded. Phosphoserine is present on Ser132. Zn(2+) is bound at residue Glu199. Cys207 and Cys215 are oxidised to a cystine.

This sequence belongs to the somatotropin/prolactin family.

The protein localises to the secreted. Plays an important role in growth control. Its major role in stimulating body growth is to stimulate the liver and other tissues to secrete IGF1. It stimulates both the differentiation and proliferation of myoblasts. It also stimulates amino acid uptake and protein synthesis in muscle and other tissues. The protein is Somatotropin (GH1) of Cervus elaphus (Red deer).